The chain runs to 452 residues: DNA primase DnaG (452 aa).

In terms of domain architecture, Toprim spans Asp-172 to Pro-248. Mg(2+) is bound by residues Glu-178, Asp-222, and Asp-224. Residues Lys-289–Gln-320 are disordered. Residues Gln-294–Gln-320 show a composition bias toward low complexity.

The protein belongs to the archaeal DnaG primase family. As to quaternary structure, forms a ternary complex with MCM helicase and DNA. Component of the archaeal exosome complex. The cofactor is Mg(2+).

It catalyses the reaction ssDNA + n NTP = ssDNA/pppN(pN)n-1 hybrid + (n-1) diphosphate.. Functionally, RNA polymerase that catalyzes the synthesis of short RNA molecules used as primers for DNA polymerase during DNA replication. Also part of the exosome, which is a complex involved in RNA degradation. Acts as a poly(A)-binding protein that enhances the interaction between heteromeric, adenine-rich transcripts and the exosome. This Caldivirga maquilingensis (strain ATCC 700844 / DSM 13496 / JCM 10307 / IC-167) protein is DNA primase DnaG.